We begin with the raw amino-acid sequence, 1150 residues long: ATP-dependent helicase/deoxyribonuclease subunit B (1150 aa).

8 to 15 is a binding site for ATP; it reads GRAGSGKS. The [4Fe-4S] cluster site is built by cysteine 789, cysteine 1109, cysteine 1112, and cysteine 1118.

This sequence belongs to the helicase family. AddB/RexB type 1 subfamily. Heterodimer of AddA and AddB. Mg(2+) is required as a cofactor. [4Fe-4S] cluster serves as cofactor.

The heterodimer acts as both an ATP-dependent DNA helicase and an ATP-dependent, dual-direction single-stranded exonuclease. Recognizes the chi site generating a DNA molecule suitable for the initiation of homologous recombination. The AddB subunit has 5' -&gt; 3' nuclease activity but not helicase activity. This chain is ATP-dependent helicase/deoxyribonuclease subunit B, found in Clostridium kluyveri (strain NBRC 12016).